The primary structure comprises 650 residues: Laccase-like multicopper oxidase 1 (650 aa).

The first 20 residues, 1–20, serve as a signal peptide directing secretion; the sequence is MLLSKLSILLAKWLSVAVYA. 3 consecutive Plastocyanin-like domains span residues 41 to 151, 162 to 360, and 439 to 595; these read QVPS…IVED, ERIL…LRYN, and KPVL…VVGD. Cys-46 and Cys-254 are disulfide-bonded. Residues Asn-55 and Asn-83 are each glycosylated (N-linked (GlcNAc...) asparagine). Positions 87, 89, 133, and 135 each coordinate Cu cation. The Cu cation site is built by His-501, His-504, His-506, His-576, Cys-577, His-578, and His-582. Asn-620 carries N-linked (GlcNAc...) asparagine glycosylation.

This sequence belongs to the multicopper oxidase family. In terms of assembly, monomer. N-glycosylation Asn-55 and Asn-83 is involved in folding, conformational stability and laccase activity.

It carries out the reaction 2 2',3,4-trihydroxy-trans-chalcone + O2 + 2 H(+) = 2 3',4'-dihydroxyaurone + 2 H2O. Its activity is regulated as follows. Retains almost half of its activity in presence of high salt concentrations up to 100 mM NaCl. Retains also more than 85% of its original activity in the presence of 1 mM EDTA, indicating a satisfactory resistance towards chelators, which is rare among metal-containing enzyme. The activity drops significantly in the presence of NaN(3) or SDS. Appears more active in the presence of methanol compared to ethanol, but acetone or DMSO addition severely affect remaining laccase activity. Its function is as follows. Yellow laccase-like multicopper oxidase that is able to oxidize a variety of phenolic compounds including standard laccase substrates such as 2'-azino-bis(3-ethylbenzothiazoline-6-sulphonic acid) (ABTS) and 2,6-dimethoxyphenol (2,6-DMP). The existence of an ortho-hydroxy group is crucial for oxidation since pyrogallol and catechol, which contain ortho-hydroxy groups, are readily oxidized, which is not the case for resorcinol and hydroquinone, that contain meta- and para-hydroxy groups, respectively. The same is also true for the existence of a methoxy group in an ortho-position, since 2,6-DMP, guaiacol and ferulic and caffeic acids are also rather easily oxidized compared with the corresponding unsubstituted compound. Can be used for the bioconversion of 2',3,4-trihy-droxychalcone to 3',4'-dihydroxy-aurone, a bioactive aurone recently shown to possess inhibitory activity against several isoforms of the histone deacetylase complex (HDAC). The sequence is that of Laccase-like multicopper oxidase 1 from Thermothelomyces thermophilus (strain ATCC 42464 / BCRC 31852 / DSM 1799) (Sporotrichum thermophile).